Consider the following 218-residue polypeptide: Uracil-DNA glycosylase (218 aa).

Aspartate 68 (proton acceptor) is an active-site residue.

Belongs to the uracil-DNA glycosylase (UDG) superfamily. UNG family. As to quaternary structure, homodimer. Interacts with protein OPG148. Component of the Uracil-DNA glycosylase(UDG)-OPG148-polymerase complex; OPG148 and UDG form a heterodimeric processivity factor that associates with OPG71 to form the processive polymerase holoenzyme.

It carries out the reaction Hydrolyzes single-stranded DNA or mismatched double-stranded DNA and polynucleotides, releasing free uracil.. Plays an essential role in viral replication as a component of the DNA polymerase processivity factor. Excises uracil residues from the DNA which can arise as a result of misincorporation of dUMP residues by DNA polymerase or due to deamination of cytosine. The sequence is that of Uracil-DNA glycosylase (OPG116) from Variola virus.